Consider the following 198-residue polypeptide: MSISMDQVKELRERTGAGILDCKKALTDTSGDVDAAIKILREKGLAAAAKKSSRDASDGRIEVYVHPGNKVVAIVEVNCETDFVAKTDDFKKLAYDLALHVAATNPSYVNREEVPAAEVEREREILRQQNVDSGKPANIVEKIVEGRIEKFYGEIVLLEQEFVKDPSVKIKDLVQEAIAKLGENIVVRRFSRFEVGSN.

Residues 81–84 (TDFV) are involved in Mg(2+) ion dislocation from EF-Tu.

It belongs to the EF-Ts family.

The protein resides in the cytoplasm. In terms of biological role, associates with the EF-Tu.GDP complex and induces the exchange of GDP to GTP. It remains bound to the aminoacyl-tRNA.EF-Tu.GTP complex up to the GTP hydrolysis stage on the ribosome. The protein is Elongation factor Ts of Herpetosiphon aurantiacus (strain ATCC 23779 / DSM 785 / 114-95).